The chain runs to 122 residues: Large ribosomal subunit protein uL14c (122 aa).

It belongs to the universal ribosomal protein uL14 family. As to quaternary structure, part of the 50S ribosomal subunit.

The protein resides in the plastid. It is found in the chloroplast. In terms of biological role, binds to 23S rRNA. The sequence is that of Large ribosomal subunit protein uL14c from Adiantum capillus-veneris (Maidenhair fern).